An 87-amino-acid polypeptide reads, in one-letter code: Phosphocarrier protein HPr (87 aa).

The 86-residue stretch at 2–87 folds into the HPr domain; sequence ASKDFHIVAE…NETMTKEGLA (86 aa). Catalysis depends on histidine 15, which acts as the Pros-phosphohistidine intermediate. Serine 46 is modified (phosphoserine; by HPrK/P).

The protein belongs to the HPr family.

It localises to the cytoplasm. Its activity is regulated as follows. Phosphorylation on Ser-46 inhibits the phosphoryl transfer from enzyme I to HPr. Functionally, general (non sugar-specific) component of the phosphoenolpyruvate-dependent sugar phosphotransferase system (sugar PTS). This major carbohydrate active-transport system catalyzes the phosphorylation of incoming sugar substrates concomitantly with their translocation across the cell membrane. The phosphoryl group from phosphoenolpyruvate (PEP) is transferred to the phosphoryl carrier protein HPr by enzyme I. Phospho-HPr then transfers it to the PTS EIIA domain. Its function is as follows. P-Ser-HPr interacts with the catabolite control protein A (CcpA), forming a complex that binds to DNA at the catabolite response elements cre, operator sites preceding a large number of catabolite-regulated genes. Thus, P-Ser-HPr is a corepressor in carbon catabolite repression (CCR), a mechanism that allows bacteria to coordinate and optimize the utilization of available carbon sources. P-Ser-HPr also plays a role in inducer exclusion, in which it probably interacts with several non-PTS permeases and inhibits their transport activity. The protein is Phosphocarrier protein HPr (ptsH) of Streptococcus mutans serotype c (strain ATCC 700610 / UA159).